The chain runs to 252 residues: 5'-nucleotidase SurE (252 aa).

4 residues coordinate a divalent metal cation: Asp-8, Asp-9, Ser-39, and Asn-91.

It belongs to the SurE nucleotidase family. It depends on a divalent metal cation as a cofactor.

It is found in the cytoplasm. The catalysed reaction is a ribonucleoside 5'-phosphate + H2O = a ribonucleoside + phosphate. Its function is as follows. Nucleotidase that shows phosphatase activity on nucleoside 5'-monophosphates. The polypeptide is 5'-nucleotidase SurE (Legionella pneumophila (strain Paris)).